We begin with the raw amino-acid sequence, 236 residues long: Ribose-5-phosphate isomerase A (236 aa).

Residues 29 to 32 (SGST), 86 to 89 (DGAD), and 99 to 102 (KGGG) contribute to the substrate site. Residue glutamate 108 is the Proton acceptor of the active site. Lysine 126 provides a ligand contact to substrate.

It belongs to the ribose 5-phosphate isomerase family. As to quaternary structure, homodimer.

The catalysed reaction is aldehydo-D-ribose 5-phosphate = D-ribulose 5-phosphate. It functions in the pathway carbohydrate degradation; pentose phosphate pathway; D-ribose 5-phosphate from D-ribulose 5-phosphate (non-oxidative stage): step 1/1. Its function is as follows. Catalyzes the reversible conversion of ribose-5-phosphate to ribulose 5-phosphate. The sequence is that of Ribose-5-phosphate isomerase A from Prochlorococcus marinus (strain NATL1A).